A 94-amino-acid polypeptide reads, in one-letter code: Small ribosomal subunit protein uS17 (94 aa).

A disordered region spans residues 1 to 22 (MASSSTEGQAAARGRKKSWTGK).

This sequence belongs to the universal ribosomal protein uS17 family. In terms of assembly, part of the 30S ribosomal subunit.

One of the primary rRNA binding proteins, it binds specifically to the 5'-end of 16S ribosomal RNA. The chain is Small ribosomal subunit protein uS17 from Chlorobium luteolum (strain DSM 273 / BCRC 81028 / 2530) (Pelodictyon luteolum).